The primary structure comprises 996 residues: Disabled homolog 2-interacting protein (996 aa).

The C2 domain maps to 1–118 (MENLRRAVHP…AGRQFVEKWY (118 aa)). In terms of domain architecture, Ras-GAP spans 194 to 402 (GKVKDFLTDL…TNMQRFLLEI (209 aa)). The tract at residues 453-750 (LRDVHTALST…RTPPTMLSTL (298 aa)) is necessary for interaction with AKT1. A compositionally biased stretch (polar residues) spans 460 to 475 (LSTPGSGQLPGTNDLA). 2 disordered regions span residues 460–486 (LSTP…SSVS) and 522–545 (RSSG…PDLQ). The segment covering 476 to 486 (STPGSGSSSVS) has biased composition (low complexity). A compositionally biased stretch (polar residues) spans 522–538 (RSSGVQPSPARSSSYSE). Phosphoserine; by MAP3K5 and RIPK1 is present on Ser-535. Ser-554 is subject to Phosphoserine. Disordered regions lie at residues 611 to 630 (VPTP…PQLL), 650 to 672 (PRGL…NSEE), 702 to 805 (SLTE…SPNA), 822 to 841 (EDEG…SKEE), and 971 to 996 (RNGV…SSNC). Positions 659–672 (EGHSSLSSHSNSEE) are enriched in low complexity. Over residues 726-738 (QPPPPPPPPPPAP) the composition is skewed to pro residues. 2 stretches are compositionally biased toward polar residues: residues 746 to 762 (MLST…TLAS) and 774 to 783 (LRQQSSSSKG). Residues Ser-785 and Ser-802 each carry the phosphoserine modification. The span at 830–841 (PPHRDRLRSKEE) shows a compositional bias: basic and acidic residues. Residues 832-966 (HRDRLRSKEE…SALTQLKERY (135 aa)) are a coiled coil. A compositionally biased stretch (polar residues) spans 974–996 (VSPTNPTKLQITENGEFRNSSNC).

As to quaternary structure, on plasma membrane, exists in an inactive form complexed with TNFR1; in response to TNF-alpha, dissociates from TNFR1 complex, translocates to cytoplasm and forms part of an intracellular signaling complex comprising TRADD, RIPK1, TRAF2 and MAP3K5. Interacts (via NPXY motif) with DAB2 (via PID domain). Interacts (via PH domain) with ERN1. Part of a cytoplasmic complex made of HIPK1, DAB2IP and MAP3K5 in response to TNF-alpha; this complex formation promotes MAP3K5-JNK activation and subsequent apoptosis. Interacts (via N-terminal domain) with JAK2; the interaction occurs in a IFNG/IFN-gamma-dependent manner and inhibits JAK2 autophosphorylation activity. Interacts (via C2 domain) with GSK3B; the interaction stimulates GSK3B kinase activation. Interacts (via C2 domain) with PPP2CA. Interacts (via proline-rich motif) with a regulatory p85 subunit (via SH3 domain) of the PI3K complex; the interaction inhibits the PI3K-AKT complex activity in a TNF-alpha-dependent manner in prostate cancer (PCa) cells. Interacts with AKT1; the interaction is increased in a TNF-alpha-induced manner. Interacts (via C2 domain and active form preferentially) with KDR/VEGFR2 (tyrosine-phosphorylated active form preferentially); the interaction occurs at the late phase of VEGFA response and inhibits KDR/VEGFR2 activity. Interacts (via N-terminus C2 domain) with MAP3K5 ('Ser-966' dephosphorylated form preferentially); the interaction occurs in a TNF-alpha-induced manner. Interacts (via Ras-GAP domain) with the catalytic subunit of protein phosphatase PP2A; the interaction occurs in resting endothelial cells, is further enhanced by TNF-alpha stimulation and is required to bridge PP2A to MAP3K5. Interacts (via C-terminus PER domain) with TRAF2 (via zinc fingers); the interaction occurs in a TNF-alpha-dependent manner. Interacts with 14-3-3 proteins; the interaction occurs in a TNF-alpha-dependent manner. Interacts (via Ras-GAP domain) with RIPK1 (via kinase domain); the interaction occurs in a TNF-alpha-dependent manner. Interacts with DAB1 and DAB2. Interacts with RAB40C; acts as a GAP for RAB40C. Post-translationally, in response to TNF-alpha-induction, phosphorylated at Ser-535; phosphorylation leads to a conformational change, and thus, increases its association with 14-3-3 proteins, MAP3K5, RIPK1 and TRAF2 in endothelial cells; also stimulates regulatory p85 subunit sequestring and PI3K-p85 complex activity inhibition. As to expression, expressed in brain, lung, thymus, bladder and skeletal muscle. Up-regulatedd during prostate degeneration.

The protein resides in the cytoplasm. It localises to the cell membrane. Its subcellular location is the membrane. It is found in the cell projection. The protein localises to the dendrite. In terms of biological role, functions as a scaffold protein implicated in the regulation of a large spectrum of both general and specialized signaling pathways. Involved in several processes such as innate immune response, inflammation and cell growth inhibition, apoptosis, cell survival, angiogenesis, cell migration and maturation. Also plays a role in cell cycle checkpoint control; reduces G1 phase cyclin levels resulting in G0/G1 cell cycle arrest. Mediates signal transduction by receptor-mediated inflammatory signals, such as the tumor necrosis factor (TNF), interferon (IFN) or lipopolysaccharide (LPS). Modulates the balance between phosphatidylinositol 3-kinase (PI3K)-AKT-mediated cell survival and apoptosis stimulated kinase (MAP3K5)-JNK signaling pathways; sequesters both AKT1 and MAP3K5 and counterbalances the activity of each kinase by modulating their phosphorylation status in response to pro-inflammatory stimuli. Acts as a regulator of the endoplasmic reticulum (ER) unfolded protein response (UPR) pathway; specifically involved in transduction of the ER stress-response to the JNK cascade through ERN1. Mediates TNF-alpha-induced apoptosis activation by facilitating dissociation of inhibitor 14-3-3 from MAP3K5; recruits the PP2A phosphatase complex which dephosphorylates MAP3K5 on 'Ser-966', leading to the dissociation of 13-3-3 proteins and activation of the MAP3K5-JNK signaling pathway in endothelial cells. Acts a negative regulator in the IFN-gamma-mediated JAK-STAT signaling cascade by inhibiting smooth muscle cell (VSMCs) proliferation and intimal expansion, and thus, prevents graft arteriosclerosis (GA). Acts as a GTPase-activating protein (GAP) for the ADP ribosylation factor 6 (ARF6). Promotes hydrolysis of the ARF6-bound GTP and thus, negatively regulates phosphatidylinositol 4,5-bisphosphate (PIP2)-dependent TLR4-TIRAP-MyD88 and NF-kappa-B signaling pathways in endothelial cells in response to lipopolysaccharides (LPS). Binds specifically to phosphatidylinositol 4-phosphate (PtdIns4P) and phosphatidylinositol 3-phosphate (PtdIns3P). In response to vascular endothelial growth factor (VEGFA), acts as a negative regulator of the VEGFR2-PI3K-mediated angiogenic signaling pathway by inhibiting endothelial cell migration and tube formation. In the developing brain, promotes both the transition from the multipolar to the bipolar stage and the radial migration of cortical neurons from the ventricular zone toward the superficial layer of the neocortex in a glial-dependent locomotion process. Probable downstream effector of the Reelin signaling pathway; promotes Purkinje cell (PC) dendrites development and formation of cerebellar synapses. Also functions as a tumor suppressor protein in prostate cancer progression; prevents cell proliferation and epithelial-to-mesenchymal transition (EMT) through activation of the glycogen synthase kinase-3 beta (GSK3B)-induced beta-catenin and inhibition of PI3K-AKT and Ras-MAPK survival downstream signaling cascades, respectively. Mediates TNF/TRAF2-induced MAP3K5-JNK activation, while it inhibits CHUK-NF-kappa-B signaling. Functions as a Ras GTPase-activating protein. May act as a tumor suppressor gene. This Rattus norvegicus (Rat) protein is Disabled homolog 2-interacting protein (Dab2ip).